A 343-amino-acid polypeptide reads, in one-letter code: tRNA N6-adenosine threonylcarbamoyltransferase (343 aa).

Histidine 120 and histidine 124 together coordinate Fe cation. Substrate-binding positions include 142–146 (VVSGG), aspartate 175, glycine 188, aspartate 192, and asparagine 281. A Fe cation-binding site is contributed by aspartate 310.

It belongs to the KAE1 / TsaD family. Requires Fe(2+) as cofactor.

The protein resides in the cytoplasm. It carries out the reaction L-threonylcarbamoyladenylate + adenosine(37) in tRNA = N(6)-L-threonylcarbamoyladenosine(37) in tRNA + AMP + H(+). Required for the formation of a threonylcarbamoyl group on adenosine at position 37 (t(6)A37) in tRNAs that read codons beginning with adenine. Is involved in the transfer of the threonylcarbamoyl moiety of threonylcarbamoyl-AMP (TC-AMP) to the N6 group of A37, together with TsaE and TsaB. TsaD likely plays a direct catalytic role in this reaction. The chain is tRNA N6-adenosine threonylcarbamoyltransferase from Bacillus thuringiensis (strain Al Hakam).